A 335-amino-acid polypeptide reads, in one-letter code: Cytoskeleton protein RodZ (335 aa).

Residues Met1–Gly111 lie on the Cytoplasmic side of the membrane. Residues Leu19–Leu71 enclose the HTH cro/C1-type domain. Positions Gln30–Glu49 form a DNA-binding region, H-T-H motif. Residues Trp112–Trp132 traverse the membrane as a helical; Signal-anchor for type II membrane protein segment. The Periplasmic portion of the chain corresponds to Trp133–Gln335. Positions Asp148 to Leu164 are enriched in polar residues. The tract at residues Asp148–Thr244 is disordered. Composition is skewed to low complexity over residues Asp165–Gln205 and Asp217–Asp239.

This sequence belongs to the RodZ family.

The protein resides in the cell inner membrane. Cytoskeletal protein that is involved in cell-shape control through regulation of the length of the long axis. This chain is Cytoskeleton protein RodZ, found in Escherichia coli O81 (strain ED1a).